Consider the following 347-residue polypeptide: Uroporphyrinogen decarboxylase (347 aa).

Residues 23-27 (RQAGR), Asp-73, Tyr-150, Thr-205, and His-323 each bind substrate.

This sequence belongs to the uroporphyrinogen decarboxylase family. As to quaternary structure, homodimer.

The protein resides in the cytoplasm. It carries out the reaction uroporphyrinogen III + 4 H(+) = coproporphyrinogen III + 4 CO2. It functions in the pathway porphyrin-containing compound metabolism; protoporphyrin-IX biosynthesis; coproporphyrinogen-III from 5-aminolevulinate: step 4/4. Catalyzes the decarboxylation of four acetate groups of uroporphyrinogen-III to yield coproporphyrinogen-III. This chain is Uroporphyrinogen decarboxylase, found in Ruthia magnifica subsp. Calyptogena magnifica.